Consider the following 384-residue polypeptide: 8-amino-7-oxononanoate synthase (384 aa).

Residue R21 coordinates substrate. Pyridoxal 5'-phosphate is bound at residue G108 to F109. H133 lines the substrate pocket. Pyridoxal 5'-phosphate-binding residues include S179, H207, and T233. Position 236 is an N6-(pyridoxal phosphate)lysine (K236). Substrate is bound at residue T352.

The protein belongs to the class-II pyridoxal-phosphate-dependent aminotransferase family. BioF subfamily. As to quaternary structure, homodimer. It depends on pyridoxal 5'-phosphate as a cofactor.

The enzyme catalyses 6-carboxyhexanoyl-[ACP] + L-alanine + H(+) = (8S)-8-amino-7-oxononanoate + holo-[ACP] + CO2. It functions in the pathway cofactor biosynthesis; biotin biosynthesis. In terms of biological role, catalyzes the decarboxylative condensation of pimeloyl-[acyl-carrier protein] and L-alanine to produce 8-amino-7-oxononanoate (AON), [acyl-carrier protein], and carbon dioxide. In Citrobacter koseri (strain ATCC BAA-895 / CDC 4225-83 / SGSC4696), this protein is 8-amino-7-oxononanoate synthase.